The primary structure comprises 369 residues: Putative F-box protein At1g70960 (369 aa).

One can recognise an F-box domain in the interval 3 to 54 (NTSFETLPRHMQMEILSRVPLKFLMKFMCVSKKWASIIRGEEFREDYLFQSM).

This chain is Putative F-box protein At1g70960, found in Arabidopsis thaliana (Mouse-ear cress).